Reading from the N-terminus, the 328-residue chain is MLNEFPIFDYEDIQLIPNKCVIKSRAEADTSVTLGNHTFKLPVVPANMQTILDENVAEQLAKGGYFYIMHRFDEAGRIPFIKRMHDQGLIASISVGVKDYEYDFVSQLKADAPEYITIDIAHGHADSVISMIQHIKKELPDTFVIAGNVGTPEAVRELENAGADATKVGIGPGKVCITKVKTGFGTGGWQLAALRWCAKAARKPIIADGGIRTHGDIAKSIRFGASMIMIGSLFAGHIESPGKTIEVDGEQFKEYYGSASQYQKGAYKNVEGKRILLPAKGHLQDTLTEMEQDLQSAISYAGGRQVADLKHVDYVIVKNSIWNGDASH.

Cys-176 serves as the catalytic Thioimidate intermediate. An NADP(+)-binding site is contributed by 205-228 (IIADGGIRTHGDIAKSIRFGASMI).

Belongs to the IMPDH/GMPR family. GuaC type 2 subfamily.

The catalysed reaction is IMP + NH4(+) + NADP(+) = GMP + NADPH + 2 H(+). In terms of biological role, catalyzes the irreversible NADPH-dependent deamination of GMP to IMP. It functions in the conversion of nucleobase, nucleoside and nucleotide derivatives of G to A nucleotides, and in maintaining the intracellular balance of A and G nucleotides. This Streptococcus pneumoniae serotype 2 (strain D39 / NCTC 7466) protein is GMP reductase.